A 263-amino-acid chain; its full sequence is tRNA (guanine-N(7)-)-methyltransferase (263 aa).

A disordered region spans residues 1-33 (MSDHGRMHSTGSEVAAPVAPDPDTEGVHPHFNR). S-adenosyl-L-methionine is bound by residues E89, E114, D146, and D169. D169 is an active-site residue. Residues K173, D205, and 242–245 (TKYE) each bind substrate.

It belongs to the class I-like SAM-binding methyltransferase superfamily. TrmB family.

The enzyme catalyses guanosine(46) in tRNA + S-adenosyl-L-methionine = N(7)-methylguanosine(46) in tRNA + S-adenosyl-L-homocysteine. It functions in the pathway tRNA modification; N(7)-methylguanine-tRNA biosynthesis. Functionally, catalyzes the formation of N(7)-methylguanine at position 46 (m7G46) in tRNA. The chain is tRNA (guanine-N(7)-)-methyltransferase from Mycolicibacterium gilvum (strain PYR-GCK) (Mycobacterium gilvum (strain PYR-GCK)).